Here is a 588-residue protein sequence, read N- to C-terminus: Putative pentatricopeptide repeat-containing protein At5g52630 (588 aa).

PPR repeat units follow at residues 14-48 (NYNQ…GLSL), 49-79 (IPLV…SPQK), 80-114 (SSTT…NLRP), 115-149 (DDHV…GYDA), 150-180 (DVFV…MPQR), 181-215 (NVVT…NLAV), 216-250 (NDYS…SFDS), 251-281 (SSFV…VPVK), 282-316 (NLGI…GMKP), 317-351 (NFIT…RIEP), and 352-386 (TDKH…PTES). The tract at residues 387-462 (VWGALLTSCT…ETGLSWVEER (76 aa)) is type E motif. The tract at residues 463–493 (NKVHTFAAGERRHEKSKEIYEKLAELGEEME) is type E(+) motif. The type DYW motif stretch occupies residues 494-588 (KAGYIADTSY…DGKCSCNDYW (95 aa)).

The protein belongs to the PPR family. PCMP-H subfamily.

The sequence is that of Putative pentatricopeptide repeat-containing protein At5g52630 (PCMP-H52) from Arabidopsis thaliana (Mouse-ear cress).